Reading from the N-terminus, the 279-residue chain is Acetylglutamate kinase (279 aa).

Residues 64 to 65 (GG), R86, and N177 contribute to the substrate site.

This sequence belongs to the acetylglutamate kinase family. ArgB subfamily.

The protein resides in the cytoplasm. It catalyses the reaction N-acetyl-L-glutamate + ATP = N-acetyl-L-glutamyl 5-phosphate + ADP. It participates in amino-acid biosynthesis; L-arginine biosynthesis; N(2)-acetyl-L-ornithine from L-glutamate: step 2/4. In terms of biological role, catalyzes the ATP-dependent phosphorylation of N-acetyl-L-glutamate. This chain is Acetylglutamate kinase, found in Campylobacter jejuni subsp. doylei (strain ATCC BAA-1458 / RM4099 / 269.97).